A 320-amino-acid polypeptide reads, in one-letter code: Cytochrome c biogenesis protein CcsA (320 aa).

7 consecutive transmembrane segments (helical) span residues I13–V33, G46–G66, L73–L93, M147–I167, I226–N246, E259–H274, and V289–I309.

The protein belongs to the CcmF/CycK/Ccl1/NrfE/CcsA family. In terms of assembly, may interact with Ccs1.

It is found in the plastid. The protein localises to the chloroplast thylakoid membrane. In terms of biological role, required during biogenesis of c-type cytochromes (cytochrome c6 and cytochrome f) at the step of heme attachment. The chain is Cytochrome c biogenesis protein CcsA from Gossypium barbadense (Sea Island cotton).